Consider the following 251-residue polypeptide: Triosephosphate isomerase (251 aa).

12–14 (NWK) provides a ligand contact to substrate. The Electrophile role is filled by His99. Catalysis depends on Glu169, which acts as the Proton acceptor. Residues Gly175, Ser214, and 235–236 (GG) contribute to the substrate site.

It belongs to the triosephosphate isomerase family. In terms of assembly, homodimer.

Its subcellular location is the cytoplasm. The enzyme catalyses D-glyceraldehyde 3-phosphate = dihydroxyacetone phosphate. Its pathway is carbohydrate biosynthesis; gluconeogenesis. It participates in carbohydrate degradation; glycolysis; D-glyceraldehyde 3-phosphate from glycerone phosphate: step 1/1. Its function is as follows. Involved in the gluconeogenesis. Catalyzes stereospecifically the conversion of dihydroxyacetone phosphate (DHAP) to D-glyceraldehyde-3-phosphate (G3P). In Bradyrhizobium sp. (strain ORS 278), this protein is Triosephosphate isomerase.